We begin with the raw amino-acid sequence, 460 residues long: Argininosuccinate lyase (460 aa).

The protein belongs to the lyase 1 family. Argininosuccinate lyase subfamily.

The protein resides in the cytoplasm. The catalysed reaction is 2-(N(omega)-L-arginino)succinate = fumarate + L-arginine. It functions in the pathway amino-acid biosynthesis; L-arginine biosynthesis; L-arginine from L-ornithine and carbamoyl phosphate: step 3/3. The polypeptide is Argininosuccinate lyase (Mannheimia succiniciproducens (strain KCTC 0769BP / MBEL55E)).